The primary structure comprises 526 residues: MIDLSTIAAQLNARTILPEGIVVITLLVVLVGDLILGRSSTKWTPYAAIVGLLGAIVALYTQWDSSNTIGFLGAFNADALSIAFRGIIAISAITTILMSVAYIEQTGTPLGEFICILLTATLGAMFLSGADELVMIFISLETLSISSYLLTGYTKRDPRSNEAALKYLLIGAASSAIFLYGISLLYGLSGGETRLTAIASSMANAGSANISLALVIALVFAIAGISFKISAVPFHQWTPDVYEGSPTPVVAFLSVGSKAAGFALAIRLLVTAFPLVSEQWHFVFTALAILSMVLGNVVALAQTSMKRLLAYSSIGQAGFVMIGLLANTEAGYASMIFYLLVYLFMNLGGFTCVILFSLRTGTDQISEYAGLYQKDPLLTLGLSLCLLSLGGIPPLAGFFGKIYLFWAGWQAGLYWLVLLGLITSVASIYYYIRVVKMMVVKEPQEMSDVIKNYPPISWKLPGMRPLQVGLILSVLATSLAGILSNPLFTLANSSIAKTPMLNSALVKTVEANSVASQLDFSLPSKN.

14 helical membrane passes run I16–L36, W43–W63, L80–V100, L110–A130, L133–Y153, L168–L188, L212–V232, P246–I266, W280–L300, L308–T328, I336–F356, L380–G400, I402–I422, and V468–F488.

The protein belongs to the complex I subunit 2 family. As to quaternary structure, NDH-1 can be composed of about 15 different subunits; different subcomplexes with different compositions have been identified which probably have different functions.

It localises to the cellular thylakoid membrane. The enzyme catalyses a plastoquinone + NADH + (n+1) H(+)(in) = a plastoquinol + NAD(+) + n H(+)(out). It carries out the reaction a plastoquinone + NADPH + (n+1) H(+)(in) = a plastoquinol + NADP(+) + n H(+)(out). In terms of biological role, NDH-1 shuttles electrons from an unknown electron donor, via FMN and iron-sulfur (Fe-S) centers, to quinones in the respiratory and/or the photosynthetic chain. The immediate electron acceptor for the enzyme in this species is believed to be plastoquinone. Couples the redox reaction to proton translocation, and thus conserves the redox energy in a proton gradient. Cyanobacterial NDH-1 also plays a role in inorganic carbon-concentration. The sequence is that of NAD(P)H-quinone oxidoreductase subunit 2 from Trichodesmium erythraeum (strain IMS101).